The sequence spans 192 residues: Probable chorismate pyruvate-lyase (192 aa).

Substrate-binding residues include arginine 85, leucine 120, and glutamate 176.

The protein belongs to the UbiC family.

Its subcellular location is the cytoplasm. The catalysed reaction is chorismate = 4-hydroxybenzoate + pyruvate. It functions in the pathway cofactor biosynthesis; ubiquinone biosynthesis. In terms of biological role, removes the pyruvyl group from chorismate, with concomitant aromatization of the ring, to provide 4-hydroxybenzoate (4HB) for the ubiquinone pathway. The polypeptide is Probable chorismate pyruvate-lyase (Pseudoalteromonas atlantica (strain T6c / ATCC BAA-1087)).